The sequence spans 164 residues: Ferritin heavy chain (164 aa).

A Ferritin-like diiron domain is found at 1-141 (AINRQINLEL…DHVTNLRKMG (141 aa)). The Fe cation site is built by Glu9, Glu44, His47, Glu89, and Gln123. A phosphoserine mark is found at Ser160 and Ser164.

Belongs to the ferritin family. In terms of assembly, oligomer of 24 subunits. There are two types of subunits: L (light) chain and H (heavy) chain. The major chain can be light or heavy, depending on the species and tissue type. The functional molecule forms a roughly spherical shell with a diameter of 12 nm and contains a central cavity into which the insoluble mineral iron core is deposited. Interacts with NCOA4; NCOA4 promotes targeting of the iron-binding ferritin complex to autolysosomes following starvation or iron depletion.

It localises to the cytoplasm. It is found in the lysosome. Its subcellular location is the cytoplasmic vesicle. The protein localises to the autophagosome. It carries out the reaction 4 Fe(2+) + O2 + 4 H(+) = 4 Fe(3+) + 2 H2O. Stores iron in a soluble, non-toxic, readily available form. Important for iron homeostasis. Has ferroxidase activity. Iron is taken up in the ferrous form and deposited as ferric hydroxides after oxidation. Also plays a role in delivery of iron to cells. Mediates iron uptake in capsule cells of the developing kidney. Delivery to lysosomes is mediated by the cargo receptor NCOA4 for autophagic degradation and release of iron. This chain is Ferritin heavy chain (FTH1), found in Oryctolagus cuniculus (Rabbit).